The primary structure comprises 336 residues: Type II methyltransferase M.PvuII (336 aa).

2 repeat units span residues 11 to 113 and 181 to 293. A disordered region spans residues 196–215; sequence TPKTRPSGHDIGKSFSKDNG. Basic and acidic residues predominate over residues 202-211; sequence SGHDIGKSFS.

The protein belongs to the N(4)/N(6)-methyltransferase family. N(4) subfamily. In terms of assembly, monomer.

The catalysed reaction is a 2'-deoxycytidine in DNA + S-adenosyl-L-methionine = an N(4)-methyl-2'-deoxycytidine in DNA + S-adenosyl-L-homocysteine + H(+). Functionally, a beta subtype methylase, recognizes the double-stranded sequence 5'-CAGCTG-3', methylates C-4 on both strands, and protects the DNA from cleavage by the PvuII endonuclease. The chain is Type II methyltransferase M.PvuII from Proteus hauseri.